Reading from the N-terminus, the 174-residue chain is Co-chaperone protein HscB homolog (174 aa).

The J domain occupies 2–74; sequence NYFELFKFSP…IRRAEHMLSL (73 aa).

Belongs to the HscB family. As to quaternary structure, interacts with HscA and stimulates its ATPase activity.

Functionally, co-chaperone involved in the maturation of iron-sulfur cluster-containing proteins. Seems to help targeting proteins to be folded toward HscA. The protein is Co-chaperone protein HscB homolog of Shewanella sp. (strain ANA-3).